A 426-amino-acid polypeptide reads, in one-letter code: MLDIAYIRQNPDEVAAMLRHRQLASEEPKLQQLLECDRQRKELVQRSDEQKALRNKVSKEVAEIKKKGVGSPDELISQMKAVSDAITAMDSRLSELEAEMENLLLALPNKLHPSVPIGRSAEDNMVFGEPVHFEHSLNFPLKNHLELGKALRILDFERGAKVSGAGFPVYVGKGARLERALINFMLDMHTEQHGYTEVFPPFLVNQESLRGTGQWPKFADQVYYIGEDDLYAIPTAEVPLTNLHRGEMVETNALPISYTAYTACFRREAGSYGKDTRGFLRVHQFNKVEMVKFTRPEDSYTALEEIRHHAQAILEALKIPYRVLLLCSGDISANATKCYDIEVWSPAEEKYLEASSCSNFEEYQARRSNIRFKPDSKSKPEFVHTLNGSGLATSRLMVSLLEHYQTADGHIRVPNVLQRYTGFTEI.

235–237 (TAE) lines the L-serine pocket. Residues 266-268 (RRE) and valine 282 contribute to the ATP site. Residue glutamate 289 coordinates L-serine. ATP is bound at residue 353–356 (EASS). Serine 389 is a binding site for L-serine.

It belongs to the class-II aminoacyl-tRNA synthetase family. Type-1 seryl-tRNA synthetase subfamily. Homodimer. The tRNA molecule binds across the dimer.

It localises to the cytoplasm. The enzyme catalyses tRNA(Ser) + L-serine + ATP = L-seryl-tRNA(Ser) + AMP + diphosphate + H(+). The catalysed reaction is tRNA(Sec) + L-serine + ATP = L-seryl-tRNA(Sec) + AMP + diphosphate + H(+). It functions in the pathway aminoacyl-tRNA biosynthesis; selenocysteinyl-tRNA(Sec) biosynthesis; L-seryl-tRNA(Sec) from L-serine and tRNA(Sec): step 1/1. Its function is as follows. Catalyzes the attachment of serine to tRNA(Ser). Is also able to aminoacylate tRNA(Sec) with serine, to form the misacylated tRNA L-seryl-tRNA(Sec), which will be further converted into selenocysteinyl-tRNA(Sec). The polypeptide is Serine--tRNA ligase (Chlorobium chlorochromatii (strain CaD3)).